Consider the following 553-residue polypeptide: Hydroxylamine reductase (553 aa).

Positions 3, 6, 18, and 25 each coordinate [2Fe-2S] cluster. Hybrid [4Fe-2O-2S] cluster contacts are provided by H252, E276, C320, C408, C436, C461, E495, and K497. C408 bears the Cysteine persulfide mark.

This sequence belongs to the HCP family. Requires [2Fe-2S] cluster as cofactor. The cofactor is hybrid [4Fe-2O-2S] cluster.

The protein resides in the cytoplasm. The enzyme catalyses A + NH4(+) + H2O = hydroxylamine + AH2 + H(+). Catalyzes the reduction of hydroxylamine to form NH(3) and H(2)O. In Photobacterium phosphoreum, this protein is Hydroxylamine reductase.